Consider the following 532-residue polypeptide: Metal-staphylopine-binding protein CntA (532 aa).

Residues 1–20 form the signal peptide; sequence MRKLTKMSAMLLASGLILTG. Cys-21 is lipidated: N-palmitoyl cysteine. The S-diacylglycerol cysteine moiety is linked to residue Cys-21. Staphylopine is bound by residues Arg-165, Arg-418, and Asn-448.

It belongs to the bacterial solute-binding protein 5 family. In terms of assembly, the complex is composed of two ATP-binding proteins (CntD and CntF), two transmembrane proteins (CntB and CntC) and a solute-binding protein (CntA).

The protein resides in the cell membrane. Its activity is regulated as follows. Nickel/cobalt import is reduced in the presence of zinc. Part of the ABC transporter complex CntABCDF (Opp1) involved in the uptake of metal in complex with the metallophore staphylopine (StP). Involved in the import of divalent metals ions such as nickel, cobalt and zinc. Binds the metal via the metallophore StP, and transfers the StP-metal complex to the membrane-bound permease. Binds one molecule of StP/metal. Binds StP/Co(2+) and StP/Ni(2+) tighter than StP/Zn(2+). Plays a major role in nickel/cobalt import in zinc-depleted conditions. Contributes to virulence. Required for full urease activity in vitro. The polypeptide is Metal-staphylopine-binding protein CntA (Staphylococcus aureus (strain NCTC 8325 / PS 47)).